Consider the following 264-residue polypeptide: Proliferating cell nuclear antigen (264 aa).

Residues Arg61–Lys80 mediate DNA binding.

This sequence belongs to the PCNA family.

Its subcellular location is the nucleus. This protein is an auxiliary protein of DNA polymerase delta and is involved in the control of eukaryotic DNA replication by increasing the polymerase's processibility during elongation of the leading strand. The polypeptide is Proliferating cell nuclear antigen (Daucus carota (Wild carrot)).